The sequence spans 184 residues: TATA-box-binding protein (184 aa).

2 repeat units span residues 9-85 (IENI…IDKL) and 100-178 (VQNI…KKEL).

It belongs to the TBP family.

Functionally, general factor that plays a role in the activation of archaeal genes transcribed by RNA polymerase. Binds specifically to the TATA box promoter element which lies close to the position of transcription initiation. The chain is TATA-box-binding protein from Thermoplasma volcanium (strain ATCC 51530 / DSM 4299 / JCM 9571 / NBRC 15438 / GSS1).